We begin with the raw amino-acid sequence, 268 residues long: Indole-3-glycerol phosphate synthase (268 aa).

This sequence belongs to the TrpC family.

The catalysed reaction is 1-(2-carboxyphenylamino)-1-deoxy-D-ribulose 5-phosphate + H(+) = (1S,2R)-1-C-(indol-3-yl)glycerol 3-phosphate + CO2 + H2O. Its pathway is amino-acid biosynthesis; L-tryptophan biosynthesis; L-tryptophan from chorismate: step 4/5. This Lachnospira eligens (strain ATCC 27750 / DSM 3376 / VPI C15-48 / C15-B4) (Eubacterium eligens) protein is Indole-3-glycerol phosphate synthase.